The sequence spans 359 residues: POU domain, class 5, transcription factor 1B (359 aa).

Disordered regions lie at residues 1–53 and 87–116; these read MAGH…GVGP and QGGLETSQPESEAGVGVESNSNGASPEPCT. Serine 111 is modified (phosphoserine). One can recognise a POU-specific domain in the interval 138–212; the sequence is DIKALQKELE…LLQKWVEEAD (75 aa). Residues 229-288 constitute a DNA-binding region (homeobox); that stretch reads ARKRKRTSIENRVRGNLENLFLQCPKPTLQISHIAQQLGLEKDVVRVWFCNRRQKGKRSS. At threonine 235 the chain carries Phosphothreonine. Residues serine 236, serine 288, and serine 289 each carry the phosphoserine modification. Residues 287–322 form a disordered region; the sequence is SSSDYAQREDFEAAGSPFSGGPVSFPPAPGPHFGTP. Residues 299 to 309 are compositionally biased toward low complexity; it reads AAGSPFSGGPV. At serine 354 the chain carries Phosphoserine.

It belongs to the POU transcription factor family. Class-5 subfamily. Detected in epithelial cells of the prostate (at protein level). Detected at the mRNA level in several cancer tissues (breast, uterine cervix, lung, thyroid gland, esophagus, colon, urinary bladder, and glioma).

The protein resides in the nucleus. The protein localises to the cytoplasm. In terms of biological role, shows weak transcriptional activator activity. This chain is POU domain, class 5, transcription factor 1B (POU5F1B), found in Homo sapiens (Human).